A 362-amino-acid polypeptide reads, in one-letter code: 4-hydroxy-3-methylbut-2-en-1-yl diphosphate synthase (flavodoxin) (362 aa).

Residues Cys-266, Cys-269, Cys-301, and Glu-308 each coordinate [4Fe-4S] cluster.

The protein belongs to the IspG family. [4Fe-4S] cluster serves as cofactor.

The enzyme catalyses (2E)-4-hydroxy-3-methylbut-2-enyl diphosphate + oxidized [flavodoxin] + H2O + 2 H(+) = 2-C-methyl-D-erythritol 2,4-cyclic diphosphate + reduced [flavodoxin]. It functions in the pathway isoprenoid biosynthesis; isopentenyl diphosphate biosynthesis via DXP pathway; isopentenyl diphosphate from 1-deoxy-D-xylulose 5-phosphate: step 5/6. In terms of biological role, converts 2C-methyl-D-erythritol 2,4-cyclodiphosphate (ME-2,4cPP) into 1-hydroxy-2-methyl-2-(E)-butenyl 4-diphosphate. The protein is 4-hydroxy-3-methylbut-2-en-1-yl diphosphate synthase (flavodoxin) of Malacoplasma penetrans (strain HF-2) (Mycoplasma penetrans).